The following is a 312-amino-acid chain: DNA-directed RNA polymerase subunit alpha (312 aa).

The interval 1-229 is alpha N-terminal domain (alpha-NTD); it reads MLQYQIERID…ELFQPLATVT (229 aa). An alpha C-terminal domain (alpha-CTD) region spans residues 240-312; sequence PSPEAQIPLE…ISIPQSRTSV (73 aa).

This sequence belongs to the RNA polymerase alpha chain family. In terms of assembly, in cyanobacteria the RNAP catalytic core is composed of 2 alpha, 1 beta, 1 beta', 1 gamma and 1 omega subunit. When a sigma factor is associated with the core the holoenzyme is formed, which can initiate transcription.

It carries out the reaction RNA(n) + a ribonucleoside 5'-triphosphate = RNA(n+1) + diphosphate. DNA-dependent RNA polymerase catalyzes the transcription of DNA into RNA using the four ribonucleoside triphosphates as substrates. The protein is DNA-directed RNA polymerase subunit alpha of Prochlorococcus marinus (strain MIT 9301).